Here is a 605-residue protein sequence, read N- to C-terminus: MNHFPKLLSSQIGFDVAQTMLEYFDRHYRIFREAAVDAKTLFERGDWHGLQRLARERITSYDERVKECVEVLEDEYDAENIDDEVWQQIKLHYIGLLTSHRQPECAETFFNSVCCKILHRSYFSNDFIFVRPAISTEYLENDEPAAKPTYRAYYPGTDGLAVTLERIVTNFQLDPPFEDLTRDIGCVMQAIDDEFGHFDEAPNFQIHVLSSLFFRNKSAYIVGRIINADRVLPFAVPIRHVRPGVLALDTVLLRRDLLQIIFSFSHSYFLVDMGVPSAYVDFLCTIMPGKPKAEIYTSVGLQKQGKNLFYRDLLHHLSHSSDRFIIAPGIKGLVMLVFTLPSFPYVFKIIKDHFPPPKETTRAQIMEKYQLVKRHDRLGRMADTLEYSSVALPLARLDHALVRELEKEVPSLLEYEDDKLVIKHLYIERRMTPLNLYLQNGSDADVEHGVKEYGNAVKELMKANIFPGDMLYKNFGVTRHGRVVFYDYDEIEYLTDCNVRRVPPPRNEEDELSGEPWYTVGPHDIFPETYGPFLLGDPRVRSVFMKHHADFFDPALWQASKDKLMQGELPDFYPYDATLRFSVRYPARFGATGENDGAGDAQRAA.

Residues 327–333 (APGIKGL) and Lys-348 contribute to the ATP site. Asp-383 is a catalytic residue.

This sequence belongs to the AceK family.

It is found in the cytoplasm. It catalyses the reaction L-seryl-[isocitrate dehydrogenase] + ATP = O-phospho-L-seryl-[isocitrate dehydrogenase] + ADP + H(+). Its function is as follows. Bifunctional enzyme which can phosphorylate or dephosphorylate isocitrate dehydrogenase (IDH) on a specific serine residue. This is a regulatory mechanism which enables bacteria to bypass the Krebs cycle via the glyoxylate shunt in response to the source of carbon. When bacteria are grown on glucose, IDH is fully active and unphosphorylated, but when grown on acetate or ethanol, the activity of IDH declines drastically concomitant with its phosphorylation. This chain is Isocitrate dehydrogenase kinase/phosphatase, found in Burkholderia orbicola (strain AU 1054).